A 259-amino-acid polypeptide reads, in one-letter code: Chymotrypsin-1 (259 aa).

Positions 1–17 are cleaved as a signal peptide; sequence MLRKVFAVVSVLLVVSA. Residues 18 to 32 constitute a propeptide, activation peptide; that stretch reads AKVTKLVLDDNYVNR. Residues 33-255 form the Peptidase S1 domain; sequence VVGGEVAKNG…YHDWVRTTMA (223 aa). The cysteines at positions 59 and 75 are disulfide-linked. Active-site charge relay system residues include His-74 and Asp-119. 2 disulfides stabilise this stretch: Cys-182-Cys-198 and Cys-208-Cys-232. The active-site Charge relay system is the Ser-212.

Belongs to the peptidase S1 family. In terms of tissue distribution, after blood feeding, expression is induced in the midgut epithelium, followed by secretion into the midgut lumen.

Its subcellular location is the secreted. The enzyme catalyses Preferential cleavage: Tyr-|-Xaa, Trp-|-Xaa, Phe-|-Xaa, Leu-|-Xaa.. This is Chymotrypsin-1 (CHYM1) from Anopheles gambiae (African malaria mosquito).